A 303-amino-acid chain; its full sequence is NAD kinase (303 aa).

The active-site Proton acceptor is the D85. NAD(+) is bound by residues 85–86 (DG), R90, 159–160 (ND), K187, D189, A224, and Q259.

It belongs to the NAD kinase family. The cofactor is a divalent metal cation.

It is found in the cytoplasm. It carries out the reaction NAD(+) + ATP = ADP + NADP(+) + H(+). Involved in the regulation of the intracellular balance of NAD and NADP, and is a key enzyme in the biosynthesis of NADP. Catalyzes specifically the phosphorylation on 2'-hydroxyl of the adenosine moiety of NAD to yield NADP. In Bdellovibrio bacteriovorus (strain ATCC 15356 / DSM 50701 / NCIMB 9529 / HD100), this protein is NAD kinase.